Consider the following 228-residue polypeptide: 5'(3')-deoxyribonucleotidase, mitochondrial (228 aa).

Residues 1–31 constitute a mitochondrion transit peptide; it reads MIRLGGWCARRLCSAAVPAGRRGAAGGLGLA. Residue aspartate 41 is the Nucleophile of the active site. Mg(2+) is bound by residues aspartate 41 and aspartate 43. Aspartate 43 acts as the Proton donor in catalysis. Residues aspartate 43, phenylalanine 49, phenylalanine 75, tryptophan 76, valine 77, tryptophan 96, threonine 130, and lysine 165 each coordinate substrate. Residue aspartate 176 coordinates Mg(2+).

Belongs to the 5'(3')-deoxyribonucleotidase family. As to quaternary structure, homodimer. It depends on Mg(2+) as a cofactor. In terms of tissue distribution, highly expressed in heart, brain and skeletal muscle. Detected at very low levels in kidney and pancreas.

Its subcellular location is the mitochondrion. Its function is as follows. Dephosphorylates specifically the 5' and 2'(3')-phosphates of uracil and thymine deoxyribonucleotides, and so protects mitochondrial DNA replication from excess dTTP. Has only marginal activity towards dIMP and dGMP. The sequence is that of 5'(3')-deoxyribonucleotidase, mitochondrial (NT5M) from Homo sapiens (Human).